A 336-amino-acid polypeptide reads, in one-letter code: E3 ubiquitin-protein ligase RING2 (336 aa).

S2 is modified (N-acetylserine). The interaction with HIP2 stretch occupies residues 2–179; that stretch reads SQAVQTNGTQ…AEDNGDSSHC (178 aa). The residue at position 41 (S41) is a Phosphoserine. The segment at 51-91 adopts an RING-type zinc-finger fold; sequence CPICLDMLKNTMTTKECLHRFCADCIITALRSGNKECPTCR. Positions 93-98 are interaction with nucleosomes via an acidic patch on histone H2A and histone H2B; sequence KLVSKR. A Glycyl lysine isopeptide (Lys-Gly) (interchain with G-Cter in ubiquitin) cross-link involves residue K112. Residues S143 and S168 each carry the phosphoserine modification. Residues 157 to 213 are disordered; it reads QRGKKQQIENGSGAEDNGDSSHCSNASTHSNQEAGPSNKRTKTSDDSGLEPDNNNAA. Polar residues predominate over residues 176-191; the sequence is SSHCSNASTHSNQEAG. Residues K249 and K323 each participate in a glycyl lysine isopeptide (Lys-Gly) (interchain with G-Cter in SUMO2) cross-link.

Component of chromatin-associated Polycomb (PcG) complexes. Component of a number of PRC1-like complexes; these complexes contain either the polycomb group ring finger protein PCGF1, or PCGF2, or PCGF3, or BMI1, or PCGF5, or PCGF6. Distinct PRC1-like complexes are composed of a RING1 subunit (RING1B or RING1A), one of the six PCGF proteins (PCGF1, PCGF2, PCGF3, BMI1, PCGF5 or PCGF6), one PHC protein (PHC1, PHC2 or PHC3) and one of the CBX proteins (CBX2, CBX4, CBX6, CBX7 or CBX8). Part of a complex that contains RNF2, UB2D3 and BMI1; within that complex RNF2 and BMI1 form a tight heterodimer, where UB2D3 interacts only with RNF2. The complex composed of RNF2, UB2D3 and BMI1 binds nucleosomes, and has activity only with nucleosomal histone H2A. Part of a complex that contains PCGF5, RNF2 and UBE2D3. Part of a complex that contains AUTS2, PCGF5, RNF2, CSNK2B and RYBP. Interacts with CBX6 and CBX8. Interacts with PHC1, PCGF2, RYBP, CBX7, CBX4, CBX2, RNF1/RING1, BMI1 and PHC2. Interaction with RYBP and CBX7 is mutually exclusive; both compete for the same binding site on RNF2. Component of repressive BCOR complex containing a Polycomb group subcomplex at least composed of RYBP, PCGF1, BCOR and RING1. Interacts with CBX2 and PHC1. Interacts with CHTOP. Interacts with AURKB. Part of the E2F6.com-1 complex in G0 phase composed of E2F6, MGA, MAX, TFDP1, CBX3, BAT8, EUHMTASE1, RNF1/RING1, RNF2/RING2, MBLR, L3MBTL2 and YAF2. Component of some MLL1/MLL complex, at least composed of the core components KMT2A/MLL1, ASH2L, HCFC1/HCF1, WDR5 and RBBP5, as well as the facultative components BACC1, CHD8, E2F6, HSP70, INO80C, KANSL1, LAS1L, MAX, MCRS1, MGA, MYST1/MOF, PELP1, PHF20, PRP31, RING2, RUVB1/TIP49A, RUVB2/TIP49B, SENP3, TAF1, TAF4, TAF6, TAF7, TAF9 and TEX10. Interacts with RYBP, HIP2 and TFCP2. Interacts with NUPR1. Interacts with SAMD7 in a PHC2-dependent manner. Post-translationally, monoubiquitinated, by auto-ubiquitination. Polyubiquitinated in the presence of UBE2D3 (in vitro).

The protein resides in the nucleus. Its subcellular location is the cytoplasm. The protein localises to the chromosome. The enzyme catalyses S-ubiquitinyl-[E2 ubiquitin-conjugating enzyme]-L-cysteine + [acceptor protein]-L-lysine = [E2 ubiquitin-conjugating enzyme]-L-cysteine + N(6)-ubiquitinyl-[acceptor protein]-L-lysine.. Its pathway is protein modification; protein ubiquitination. Its function is as follows. E3 ubiquitin-protein ligase that mediates monoubiquitination of 'Lys-119' of histone H2A (H2AK119Ub), thereby playing a central role in histone code and gene regulation. H2AK119Ub gives a specific tag for epigenetic transcriptional repression and participates in X chromosome inactivation of female mammals. May be involved in the initiation of both imprinted and random X inactivation. Essential component of a Polycomb group (PcG) multiprotein PRC1-like complex, a complex class required to maintain the transcriptionally repressive state of many genes, including Hox genes, throughout development. PcG PRC1 complex acts via chromatin remodeling and modification of histones, rendering chromatin heritably changed in its expressibility. E3 ubiquitin-protein ligase activity is enhanced by BMI1/PCGF4. Acts as the main E3 ubiquitin ligase on histone H2A of the PRC1 complex, while RING1 may rather act as a modulator of RNF2/RING2 activity. Plays a role in the transcriptional repression of genes that are required for pluripotency in embryonic stem cells, thereby contributing to differentiation of the ectodermal and endodermal germ layers. Association with the chromosomal DNA is cell-cycle dependent. In resting B- and T-lymphocytes, interaction with AURKB leads to block its activity, thereby maintaining transcription in resting lymphocytes. Also acts as a negative regulator of autophagy by mediating ubiquitination of AMBRA1, leading to its subsequent degradation. The sequence is that of E3 ubiquitin-protein ligase RING2 (RNF2) from Pongo abelii (Sumatran orangutan).